Here is a 1189-residue protein sequence, read N- to C-terminus: Phosphinothricin tripeptide synthetase PhsB (1189 aa).

Residues 5–80 form the Carrier 1 domain; sequence QTDDVVTGRI…ALAKRIRASR (76 aa). At S40 the chain carries O-(pantetheine 4'-phosphoryl)serine. Disordered regions lie at residues 75–97 and 454–476; these read RIRASRSTAPTASGPPRTAPVDS and TPDRDGREPGEGPFAREESGGDT. Residues 100-541 are condensation; it reads TAPLTFQQEP…VALLPLQEPA (442 aa). Residues 455-472 show a composition bias toward basic and acidic residues; it reads PDRDGREPGEGPFAREES. The adenylation stretch occupies residues 572-969; sequence AQAHRTPDAV…GREDGQVKLR (398 aa). The interval 1045–1081 is disordered; it reads DRVPLTPSGKTDRKALPDPAAGEQPRSGRGAAPGTPA. The 76-residue stretch at 1076–1151 folds into the Carrier 2 domain; it reads APGTPAEREL…DFALAVVTAQ (76 aa). S1111 bears the O-(pantetheine 4'-phosphoryl)serine mark.

It belongs to the NRP synthetase family. The cofactor is pantetheine 4'-phosphate.

It carries out the reaction holo-[peptidyl-carrier protein] + L-alanine + ATP = L-alanyl-[peptidyl-carrier protein] + AMP + diphosphate. The protein operates within secondary metabolite biosynthesis; bialaphos biosynthesis. In terms of biological role, involved in the biosynthesis of phosphinothricin tripeptide (PTT), also known as bialaphos (BA), a natural-product antibiotic and potent herbicide. Adenylates L-alanine and loads it onto a peptidyl carrier domain via a thioester linkage to the phosphopanthetheine moiety. Shows weaker activity with aminobutyric acid and L-serine. This Streptomyces viridochromogenes (strain DSM 40736 / JCM 4977 / BCRC 1201 / Tue 494) protein is Phosphinothricin tripeptide synthetase PhsB.